Reading from the N-terminus, the 78-residue chain is UPF0349 protein ABC2936 (78 aa).

The protein belongs to the UPF0349 family.

The sequence is that of UPF0349 protein ABC2936 from Shouchella clausii (strain KSM-K16) (Alkalihalobacillus clausii).